Here is a 128-residue protein sequence, read N- to C-terminus: Small ribosomal subunit protein uS11 (128 aa).

The protein belongs to the universal ribosomal protein uS11 family. In terms of assembly, part of the 30S ribosomal subunit. Interacts with proteins S7 and S18. Binds to IF-3.

In terms of biological role, located on the platform of the 30S subunit, it bridges several disparate RNA helices of the 16S rRNA. Forms part of the Shine-Dalgarno cleft in the 70S ribosome. The sequence is that of Small ribosomal subunit protein uS11 from Desulfatibacillum aliphaticivorans.